Here is a 180-residue protein sequence, read N- to C-terminus: Large ribosomal subunit protein uL5 (180 aa).

The protein belongs to the universal ribosomal protein uL5 family. As to quaternary structure, part of the 50S ribosomal subunit; part of the 5S rRNA/L5/L18/L25 subcomplex. Contacts the 5S rRNA and the P site tRNA. Forms a bridge to the 30S subunit in the 70S ribosome.

In terms of biological role, this is one of the proteins that bind and probably mediate the attachment of the 5S RNA into the large ribosomal subunit, where it forms part of the central protuberance. In the 70S ribosome it contacts protein S13 of the 30S subunit (bridge B1b), connecting the 2 subunits; this bridge is implicated in subunit movement. Contacts the P site tRNA; the 5S rRNA and some of its associated proteins might help stabilize positioning of ribosome-bound tRNAs. The chain is Large ribosomal subunit protein uL5 from Lactobacillus helveticus (strain DPC 4571).